Here is a 587-residue protein sequence, read N- to C-terminus: MTHAPTPPAASNFLRPIIEDDLQANRFQGKLWAGKPGPAALQAQGQPDPARIRTRFPPEPNGYLHIGHAKSICVNFGLARDYGGVCHLRFDDTNPEKEEQEYVDAIIEAVHWLGFDWQADGNDNLYFASDYFEFMYEFAEALVQAGHAYVDEQSAEEIRASRGTLTEPGTDSPWRDRPADESLLRLREMRDGKHPDGSLVLRARIDMASPNINLRDPVMYRVRHATHHRTGNAWCIYPMYSWAHPVEDALEGITHSICTLEFEDQRPFYDWILARLAELGKLARPLPHQYEFARLNLTYVVTSKRKLLQLVREGYVDGWDDPRMPTLFGLRRRGYTPSSIRLFCDRTAVSKSDSRIDYSLLEQAVRDDLDPVAPRSVAVLDPLKLVITNYPEGRSETCSAPRNPHDPQAGVREFPFTRELWIEQDDFREEPPKKYFRLFPGNTVRLKYGYVVRCTGFTKDESGKVVEVQAEYLPDTKSGTPGADSVKVKGNITWVSAAHAVPAQVHLYDRLFADAHPDGGDKDFLACLNPNSKQTVQAWLEPGIEAVPGATWQFERLGYFTVDSKDSRPEAPVLNRIVTLRDSWQAA.

The 'HIGH' region motif lies at 58 to 68; sequence PEPNGYLHIGH. ATP contacts are provided by residues 59-61 and 65-71; these read EPN and HIGHAKS. Positions 91 and 240 each coordinate L-glutamine. ATP-binding positions include Thr-259 and 294-295; that span reads RL. Positions 301–305 match the 'KMSKS' region motif; the sequence is VTSKR.

Belongs to the class-I aminoacyl-tRNA synthetase family. As to quaternary structure, monomer.

It localises to the cytoplasm. The catalysed reaction is tRNA(Gln) + L-glutamine + ATP = L-glutaminyl-tRNA(Gln) + AMP + diphosphate. This is Glutamine--tRNA ligase from Bordetella pertussis (strain Tohama I / ATCC BAA-589 / NCTC 13251).